A 689-amino-acid polypeptide reads, in one-letter code: Glycine--tRNA ligase beta subunit (689 aa).

It belongs to the class-II aminoacyl-tRNA synthetase family. Tetramer of two alpha and two beta subunits.

Its subcellular location is the cytoplasm. The catalysed reaction is tRNA(Gly) + glycine + ATP = glycyl-tRNA(Gly) + AMP + diphosphate. The sequence is that of Glycine--tRNA ligase beta subunit from Aeromonas salmonicida (strain A449).